The following is a 318-amino-acid chain: Methionyl-tRNA formyltransferase (318 aa).

Ser112–Pro115 contacts (6S)-5,6,7,8-tetrahydrofolate.

The protein belongs to the Fmt family.

The catalysed reaction is L-methionyl-tRNA(fMet) + (6R)-10-formyltetrahydrofolate = N-formyl-L-methionyl-tRNA(fMet) + (6S)-5,6,7,8-tetrahydrofolate + H(+). In terms of biological role, attaches a formyl group to the free amino group of methionyl-tRNA(fMet). The formyl group appears to play a dual role in the initiator identity of N-formylmethionyl-tRNA by promoting its recognition by IF2 and preventing the misappropriation of this tRNA by the elongation apparatus. In Mycobacterium leprae (strain Br4923), this protein is Methionyl-tRNA formyltransferase.